The sequence spans 230 residues: Cutinase 1 (230 aa).

Positions 1–16 (MKFFALTTLLAATASA) are cleaved as a signal peptide. A propeptide spanning residues 17-31 (LPTSNPAQELEARQL) is cleaved from the precursor. An N-D-glucuronoyl glycine modification is found at Gly-32. An intrachain disulfide couples Cys-47 to Cys-125. The active-site Nucleophile is Ser-136. Cys-187 and Cys-194 are disulfide-bonded. Asp-191 is a catalytic residue. Residue His-204 is the Proton donor/acceptor of the active site.

It belongs to the cutinase family. Post-translationally, the 2 disulfide bonds play a critical role in holding the catalytic residues in juxta-position; reduction of the disulfide bridges results in the complete inactivation of the enzyme. O-glycosylated; contains one mole each of mannose, arabinose, N-acetylglucosamine, and glucuronic acid.

The protein localises to the secreted. The catalysed reaction is cutin + H2O = cutin monomers.. Its activity is regulated as follows. Inhibited by n-undecyl phosphonate (C11Y4). Inhibited by paraoxon. Functionally, catalyzes the hydrolysis of complex carboxylic polyesters found in the cell wall of plants. Degrades cutin, a macromolecule that forms the structure of the plant cuticle. Allows pathogenic fungi to penetrate through the cuticular barrier into the host plant during the initial stage of fungal infection. In Fusarium vanettenii (Neocosmospora pisi), this protein is Cutinase 1 (CUT1).